A 680-amino-acid chain; its full sequence is Harmonin-binding protein USHBP1 (680 aa).

Basic residues predominate over residues 1–15 (MSARATRPRSRRGRH). 2 disordered regions span residues 1-51 (MSAR…YLGP) and 134-161 (KSVE…PGQQ). Positions 179 to 218 (NREDELACTQASLQDAQAEKETLQRQVQELEDSLMQMEAS) form a coiled coil. 2 disordered regions span residues 220 to 247 (PTPI…VPQD) and 384 to 405 (TMEV…PTPE). 2 coiled-coil regions span residues 363 to 386 (TKGD…ATME) and 467 to 506 (QIQQ…LRAQ). Residues 524 to 549 (FAGDGSSGGSSEDPSSEEEAGEDRQQ) form a disordered region. The stretch at 573-662 (QELSASLARA…QAEELAVLTA (90 aa)) forms a coiled coil.

This sequence belongs to the MCC family. In terms of assembly, interacts via its C-terminus with the first PDZ domain of USH1C.

The polypeptide is Harmonin-binding protein USHBP1 (Mus musculus (Mouse)).